The following is a 212-amino-acid chain: Ribosomal RNA large subunit methyltransferase E (212 aa).

S-adenosyl-L-methionine is bound by residues Gly-57, Trp-59, Asp-77, Asp-93, and Asp-122. Lys-162 serves as the catalytic Proton acceptor.

This sequence belongs to the class I-like SAM-binding methyltransferase superfamily. RNA methyltransferase RlmE family.

The protein resides in the cytoplasm. It catalyses the reaction uridine(2552) in 23S rRNA + S-adenosyl-L-methionine = 2'-O-methyluridine(2552) in 23S rRNA + S-adenosyl-L-homocysteine + H(+). Its function is as follows. Specifically methylates the uridine in position 2552 of 23S rRNA at the 2'-O position of the ribose in the fully assembled 50S ribosomal subunit. The polypeptide is Ribosomal RNA large subunit methyltransferase E (Coxiella burnetii (strain CbuK_Q154) (Coxiella burnetii (strain Q154))).